The chain runs to 151 residues: Ubiquitin-conjugating enzyme E2 W (151 aa).

Residue methionine 1 forms a Peptide (Met-Gly) (interchain with G-Cter in ubiquitin) linkage. A UBC core domain is found at 3–151; it reads SMQKRLQKEL…TKWWYHDDTC (149 aa). Cysteine 91 acts as the Glycyl thioester intermediate in catalysis.

Belongs to the ubiquitin-conjugating enzyme family. As to quaternary structure, homodimer. Interacts with FANCL. Interacts with STUB1/CHIP. Post-translationally, autoubiquitinated at Met-1.

The protein resides in the nucleus. It catalyses the reaction S-ubiquitinyl-[E1 ubiquitin-activating enzyme]-L-cysteine + [E2 ubiquitin-conjugating enzyme]-L-cysteine = [E1 ubiquitin-activating enzyme]-L-cysteine + S-ubiquitinyl-[E2 ubiquitin-conjugating enzyme]-L-cysteine.. It carries out the reaction S-ubiquitinyl-[E1 ubiquitin-activating enzyme]-L-cysteine + [acceptor protein]-N-terminal-amino acid = [E1 ubiquitin-activating enzyme]-L-cysteine + N-terminal-ubiquitinyl-[acceptor protein].. Its pathway is protein modification; protein ubiquitination. Accepts ubiquitin from the E1 complex and catalyzes its covalent attachment to other proteins. Specifically monoubiquitinates the N-terminus of various substrates, including ATXN3, MAPT/TAU, POLR2H/RPB8 and STUB1/CHIP, by recognizing backbone atoms of disordered N-termini. Involved in degradation of misfolded chaperone substrates by mediating monoubiquitination of STUB1/CHIP, leading to recruitment of ATXN3 to monoubiquitinated STUB1/CHIP, and restriction of the length of ubiquitin chain attached to STUB1/CHIP substrates by ATXN3. After UV irradiation, but not after mitomycin-C (MMC) treatment, acts as a specific E2 ubiquitin-conjugating enzyme for the Fanconi anemia complex by associating with E3 ubiquitin-protein ligase FANCL and catalyzing monoubiquitination of FANCD2, a key step in the DNA damage pathway. In vitro catalyzes 'Lys-11'-linked polyubiquitination. UBE2W-catalyzed ubiquitination also occurs in the presence of inactive RING/U-box type E3s, i.e. lacking the active site cysteine residues to form thioester bonds with ubiquitin, or even in the absence of E3, albeit at a slower rate. The polypeptide is Ubiquitin-conjugating enzyme E2 W (Ube2w) (Mus musculus (Mouse)).